Here is a 249-residue protein sequence, read N- to C-terminus: MRFDVLTLFPELFEPFLHAGVTRRAFESGQVDVKLWQLRDFAEDNYKRVDDRPYGGGPGMVMLVEPLERALRAVRAQAGDAAPLIHFTPAGAPMTQKRVRELAAGPGAVLLCGRYEGIDQRFISRHVDEEISLGDFVLSGGELPALALLDAVTRLQPGVLNDAASHQQDSFSDGLLDCPHYSRPERLGEAAADAVPAVLLSGHHARVASWRREQQLRITALRRPDLIDAARAAGALSPADERLLASLQL.

S-adenosyl-L-methionine is bound by residues Gly-113 and 133–138 (LGDFVL).

This sequence belongs to the RNA methyltransferase TrmD family. Homodimer.

The protein localises to the cytoplasm. The enzyme catalyses guanosine(37) in tRNA + S-adenosyl-L-methionine = N(1)-methylguanosine(37) in tRNA + S-adenosyl-L-homocysteine + H(+). In terms of biological role, specifically methylates guanosine-37 in various tRNAs. The chain is tRNA (guanine-N(1)-)-methyltransferase from Leptothrix cholodnii (strain ATCC 51168 / LMG 8142 / SP-6) (Leptothrix discophora (strain SP-6)).